The chain runs to 430 residues: Histidine--tRNA ligase (430 aa).

It belongs to the class-II aminoacyl-tRNA synthetase family. Homodimer.

The protein resides in the cytoplasm. It carries out the reaction tRNA(His) + L-histidine + ATP = L-histidyl-tRNA(His) + AMP + diphosphate + H(+). This Gloeothece citriformis (strain PCC 7424) (Cyanothece sp. (strain PCC 7424)) protein is Histidine--tRNA ligase.